The following is a 290-amino-acid chain: Light-independent protochlorophyllide reductase iron-sulfur ATP-binding protein (290 aa).

Residues 10–15 (GIGKST) and Lys39 each bind ATP. Residue Ser14 participates in Mg(2+) binding. Positions 95 and 129 each coordinate [4Fe-4S] cluster. Residue 180 to 181 (NR) coordinates ATP.

This sequence belongs to the NifH/BchL/ChlL family. In terms of assembly, homodimer. Protochlorophyllide reductase is composed of three subunits; ChlL, ChlN and ChlB. [4Fe-4S] cluster is required as a cofactor.

The protein localises to the plastid. It localises to the chloroplast. The enzyme catalyses chlorophyllide a + oxidized 2[4Fe-4S]-[ferredoxin] + 2 ADP + 2 phosphate = protochlorophyllide a + reduced 2[4Fe-4S]-[ferredoxin] + 2 ATP + 2 H2O. It functions in the pathway porphyrin-containing compound metabolism; chlorophyll biosynthesis (light-independent). Component of the dark-operative protochlorophyllide reductase (DPOR) that uses Mg-ATP and reduced ferredoxin to reduce ring D of protochlorophyllide (Pchlide) to form chlorophyllide a (Chlide). This reaction is light-independent. The L component serves as a unique electron donor to the NB-component of the complex, and binds Mg-ATP. This is Light-independent protochlorophyllide reductase iron-sulfur ATP-binding protein from Chaetosphaeridium globosum (Charophycean green alga).